Reading from the N-terminus, the 409-residue chain is Lipoyl synthase, mitochondrial (409 aa).

Positions 21–41 are disordered; it reads QQQVPPSEEPRNESGAANPPL. Cys125, Cys130, Cys136, Cys159, Cys163, Cys166, and Ser375 together coordinate [4Fe-4S] cluster. The Radical SAM core domain occupies 142–364; sequence EEGDGTATAT…EKEALDMGFL (223 aa).

It belongs to the radical SAM superfamily. Lipoyl synthase family. [4Fe-4S] cluster serves as cofactor.

The protein resides in the mitochondrion. The enzyme catalyses [[Fe-S] cluster scaffold protein carrying a second [4Fe-4S](2+) cluster] + N(6)-octanoyl-L-lysyl-[protein] + 2 oxidized [2Fe-2S]-[ferredoxin] + 2 S-adenosyl-L-methionine + 4 H(+) = [[Fe-S] cluster scaffold protein] + N(6)-[(R)-dihydrolipoyl]-L-lysyl-[protein] + 4 Fe(3+) + 2 hydrogen sulfide + 2 5'-deoxyadenosine + 2 L-methionine + 2 reduced [2Fe-2S]-[ferredoxin]. Its pathway is protein modification; protein lipoylation via endogenous pathway; protein N(6)-(lipoyl)lysine from octanoyl-[acyl-carrier-protein]: step 2/2. Its function is as follows. Catalyzes the radical-mediated insertion of two sulfur atoms into the C-6 and C-8 positions of the octanoyl moiety bound to the lipoyl domains of lipoate-dependent enzymes, thereby converting the octanoylated domains into lipoylated derivatives. This Trypanosoma brucei gambiense (strain MHOM/CI/86/DAL972) protein is Lipoyl synthase, mitochondrial.